A 2240-amino-acid polypeptide reads, in one-letter code: Death-inducer obliterator 1 (2240 aa).

Position 1 is an N-acetylmethionine (Met-1). Over residues 1 to 25 (MDDKGDPSNEEAPKAIKPTSKEFRK) the composition is skewed to basic and acidic residues. Residues 1–259 (MDDKGDPSNE…EPGDLGRPKP (259 aa)) form a disordered region. 2 positions are modified to phosphoserine: Ser-60 and Ser-114. The segment covering 111 to 130 (SEGSVESASETRSGPQSAST) has biased composition (polar residues). Residues 132–146 (VKERPASSEKVKGGD) show a composition bias toward basic and acidic residues. A compositionally biased stretch (acidic residues) spans 147-156 (DHDDTSDSDS). At Thr-151 the chain carries Phosphothreonine. Residues Ser-152 and Ser-154 each carry the phosphoserine modification. 2 consecutive short sequence motifs (nuclear localization signal) follow at residues 165-173 (QNRLRRKRE) and 185-193 (QSRLRKKRR). Over residues 172–181 (REQEPTERPL) the composition is skewed to basic and acidic residues. A compositionally biased stretch (basic and acidic residues) spans 230 to 246 (GKDDRESKLEGKAAQDI). A Glycyl lysine isopeptide (Lys-Gly) (interchain with G-Cter in SUMO2) cross-link involves residue Lys-247. The PHD-type zinc finger occupies 268 to 322 (ALYCICRQPHNNRFMICCDRCEEWFHGDCVGISEARGRLLERNGEDYICPNCTIL). 9 disordered regions span residues 431–456 (SGKE…PKCG), 501–567 (STPS…RNLV), 584–618 (KKPP…GPAP), 773–826 (RPAR…EKST), 860–947 (VPSA…EDLS), 1013–1045 (LAKP…PEGD), 1206–1427 (GELD…VAYD), 1453–1472 (RRNS…TPSL), and 1517–2240 (SDAL…ASQA). Over residues 433-451 (KEQKPKPKEKMKMKPEKPS) the composition is skewed to basic and acidic residues. Residues 501–510 (STPSWASDHN) show a composition bias toward polar residues. Ser-523 carries the phosphoserine modification. Basic and acidic residues predominate over residues 530–541 (STKEDRRSEEKA). 2 stretches are compositionally biased toward low complexity: residues 542-551 (AAMAASKKTA) and 604-618 (PSSG…GPAP). The 121-residue stretch at 670–790 (IRQNIRRSLK…SRTKLHNESK (121 aa)) folds into the TFIIS central domain. The span at 773-791 (RPARSVMESRTKLHNESKK) shows a compositional bias: basic and acidic residues. Positions 800–815 (PDLEDSPPVSDSEEQQ) are enriched in acidic residues. Phosphoserine occurs at positions 805 and 809. Positions 878–890 (VKKEDLKSKHDSS) are enriched in basic and acidic residues. A Glycyl lysine isopeptide (Lys-Gly) (interchain with G-Cter in SUMO2) cross-link involves residue Lys-879. Phosphoserine occurs at positions 889 and 898. A compositionally biased stretch (pro residues) spans 930 to 941 (PGPPGDGHPEPS). Phosphoserine occurs at positions 1019, 1030, and 1040. Residues 1207-1220 (ELDKMDEKRTRLQP) are compositionally biased toward basic and acidic residues. A Phosphotyrosine modification is found at Tyr-1244. Thr-1256 is modified (phosphothreonine). A compositionally biased stretch (pro residues) spans 1258 to 1271 (PGSPPPPPPLPEPP). A phosphoserine mark is found at Ser-1260 and Ser-1312. Low complexity predominate over residues 1276–1313 (LSSLKPAAPSPATAATTAAAASTAASSTASSASKTASP). Residues 1376–1392 (LEEEEDDRPYDPEEEYD) show a composition bias toward acidic residues. Residues 1393–1424 (PERAFDTQLVERGRRHEVERAPEAAAAEREEV) show a composition bias toward basic and acidic residues. Ser-1456 carries the post-translational modification Phosphoserine. The residue at position 1469 (Thr-1469) is a Phosphothreonine. Ser-1522 and Ser-1714 each carry phosphoserine. Pro residues predominate over residues 1771–1782 (FPGPRGPAPPFP). The residue at position 1835 (Arg-1835) is an Omega-N-methylarginine. Over residues 1842–1856 (FEERKDPHGEKREFQ) the composition is skewed to basic and acidic residues. Residues Arg-1893, Arg-1894, Arg-1977, Arg-1982, Arg-1993, Arg-2008, and Arg-2024 each carry the asymmetric dimethylarginine modification. The segment covering 2044–2059 (AGPPSALSSSAPGQGP) has biased composition (low complexity). 2 stretches are compositionally biased toward basic and acidic residues: residues 2069-2101 (DFRE…KPLE) and 2109-2230 (ASED…EASR).

Interacts specifically (via PHD-type zinc finger) with histone H3 that is trimethylated at 'Lys-4' (H3K4me3), histone phosphorylation at 'Thr-3' or 'Thr-6' disrupts this binding and promotes translocation of DIDO1 from chromatin to the mitotic spindle during mitosis. In terms of tissue distribution, ubiquitous.

Its subcellular location is the cytoplasm. The protein resides in the nucleus. The protein localises to the cytoskeleton. It is found in the spindle. Functionally, putative transcription factor, weakly pro-apoptotic when overexpressed. Tumor suppressor. Required for early embryonic stem cell development. Displaces isoform 4 at the onset of differentiation, required for repression of stemness genes. This Homo sapiens (Human) protein is Death-inducer obliterator 1 (DIDO1).